A 620-amino-acid polypeptide reads, in one-letter code: Probable potassium transport system protein Kup 1 (620 aa).

The next 12 helical transmembrane spans lie at glycine 7–leucine 27, valine 50–isoleucine 70, methionine 102–isoleucine 122, proline 136–isoleucine 156, phenylalanine 168–valine 188, leucine 211–tyrosine 231, tryptophan 246–isoleucine 266, methionine 284–isoleucine 304, isoleucine 336–phenylalanine 356, isoleucine 368–leucine 388, proline 393–alanine 413, and isoleucine 415–valine 435.

The protein belongs to the HAK/KUP transporter (TC 2.A.72) family.

It localises to the cell inner membrane. It carries out the reaction K(+)(in) + H(+)(in) = K(+)(out) + H(+)(out). Transport of potassium into the cell. Likely operates as a K(+):H(+) symporter. In Rhodopseudomonas palustris (strain ATCC BAA-98 / CGA009), this protein is Probable potassium transport system protein Kup 1.